The chain runs to 392 residues: DNA-directed RNA polymerase subunit Rpo1C (392 aa).

This sequence belongs to the RNA polymerase beta' chain family. In terms of assembly, part of the 13-subunit RNA polymerase complex.

The protein resides in the cytoplasm. The catalysed reaction is RNA(n) + a ribonucleoside 5'-triphosphate = RNA(n+1) + diphosphate. Functionally, DNA-dependent RNA polymerase (RNAP) catalyzes the transcription of DNA into RNA using the four ribonucleoside triphosphates as substrates. Forms part of the jaw domain. In Saccharolobus solfataricus (strain ATCC 35092 / DSM 1617 / JCM 11322 / P2) (Sulfolobus solfataricus), this protein is DNA-directed RNA polymerase subunit Rpo1C.